A 364-amino-acid polypeptide reads, in one-letter code: MKIVLVLYDAGKHAADEEKLYGCTENKLGIANWLKDQGHELITTSDKEGETSELDKHIPDADIIITTPFHPAYITKERLDKAKNLKLVVVAGVGSDHIDLDYINQTGKKISVLEVTGSNVVSVAEHVVMTMLVLVRNFVPAHEQIINHDWEVAAIAKDAYDIEGKTIATIGAGRIGYRVLERLLPFNPKELLYYDYQALPKEAEEKVGARRVENIEELVAQADIVTVNAPLHAGTKGLINKELLSKFKKGAWLVNTARGAICVAEDVAAALESGQLRGYGGDVWFPQPAPKDHPWRDMRNKYGAGNAMTPHYSGTTLDAQTRYAEGTKNILESFFTGKFDYRPQDIILLNGEYVTKAYGKHDKK.

2 residues coordinate substrate: V93 and N119. Residues 174–175 (RI), D195, 230–234 (PLHAG), T256, D282, and 311–314 (HYSG) each bind NAD(+).

This sequence belongs to the D-isomer specific 2-hydroxyacid dehydrogenase family. FDH subfamily. In terms of assembly, homodimer.

It is found in the cytoplasm. The catalysed reaction is formate + NAD(+) = CO2 + NADH. Its activity is regulated as follows. Cu(2+), Hg and p-chloromercuribenzoate are strong inhibitors of enzyme activity and Ca(2+), Mg(2+), Zn(2+), Mn(2+), Cd(2+) and Sn(2+) have no effect on activity indicating a cysteine residue in the protein is essential for enzyme activity or to maintain the proper structure of the enzyme. Nitrite and nitrate inhibit some enzyme activity, however cyanide, azide, thiocyanate and cyanate are strong inhibitors of the enzymatic reaction. The inhibition of cyanide is competitive with formate and reversible. Catalyzes the NAD(+)-dependent oxidation of formate to carbon dioxide. Formate oxidation is the final step in the methanol oxidation pathway in methylotrophic microorganisms. Has a role in the detoxification of exogenous formate in non-methylotrophic organisms. This Candida boidinii (Yeast) protein is Formate dehydrogenase.